Here is a 23-residue protein sequence, read N- to C-terminus: Acidic phospholipase A2 Ts-A2 (23 aa).

The cofactor is Ca(2+). Post-translationally, contains 7 disulfide bonds. As to expression, expressed by the venom gland.

It localises to the secreted. The enzyme catalyses a 1,2-diacyl-sn-glycero-3-phosphocholine + H2O = a 1-acyl-sn-glycero-3-phosphocholine + a fatty acid + H(+). Exhibits moderate hydrolytic activities and prefers the anionic micelles (dPPC with deoxycholate) to the zwitterionic micelles (dPPC with Triton X-100). PLA2 catalyzes the calcium-dependent hydrolysis of the 2-acyl groups in 3-sn-phosphoglycerides. The chain is Acidic phospholipase A2 Ts-A2 from Trimeresurus stejnegeri (Chinese green tree viper).